The primary structure comprises 279 residues: Tumor necrosis factor ligand superfamily member 6 (279 aa).

Residues 1 to 78 (MQQPMNYPCP…PLKKKDHNTN (78 aa)) are Cytoplasmic-facing. The interval 30–70 (FPCPSCGPRGPDQRRPPPPPPPVSPLPPPSQPLPLPPLTPL) is disordered. The segment covering 45–68 (PPPPPPPVSPLPPPSQPLPLPPLT) has biased composition (pro residues). The helical; Signal-anchor for type II membrane protein transmembrane segment at 79–100 (LWLPVVFFMVLVALVGMGLGMY) threads the bilayer. The Extracellular portion of the chain corresponds to 101-279 (QLFHLQKELA…SKTFFGLYKL (179 aa)). Asn-117 carries an N-linked (GlcNAc...) asparagine glycan. Residues 126–135 (EKQIANPSTP) are compositionally biased toward polar residues. The tract at residues 126-150 (EKQIANPSTPSEKKEPRSVAHLTGN) is disordered. The THD domain maps to 143 to 279 (SVAHLTGNPH…SKTFFGLYKL (137 aa)). The N-linked (GlcNAc...) asparagine glycan is linked to Asn-182. A disulfide bridge connects residues Cys-200 and Cys-231. Residues Asn-248 and Asn-258 are each glycosylated (N-linked (GlcNAc...) asparagine).

Belongs to the tumor necrosis factor family. Homotrimer. Interacts with ARHGAP9, BAIAP2L1, BTK, CACNB3, CACNB4, CRK, DLG2, DNMBP, DOCK4, EPS8L3, FGR, FYB1, FYN, HCK, ITK, ITSN2, KALRN, LYN, MACC1, MIA, MPP4, MYO15A, NCF1, NCK1, NCK2, NCKIPSD, OSTF1, PIK3R1, PSTPIP1, RIMBP3C, SAMSN1, SH3GL3, SH3PXD2B, SH3PXD2A, SH3RF2, SKAP2, SNX33, SNX9, SORBS3, SPTA1, SRC, SRGAP1, SRGAP2, SRGAP3, TEC, TJP3 and YES1. Post-translationally, the soluble form derives from the membrane form by proteolytic processing. The membrane-bound form undergoes two successive intramembrane proteolytic cleavages. The first one is processed by ADAM10 producing an N-terminal fragment, which lacks the receptor-binding extracellular domain. This ADAM10-processed FasL (FAsL APL) remnant form is still membrane anchored and further processed by SPPL2A that liberates the FasL intracellular domain (FasL ICD). FasL shedding by ADAM10 is a prerequisite for subsequent intramembrane cleavage by SPPL2A in T-cells. Phosphorylated by FGR on tyrosine residues; this is required for ubiquitination and subsequent internalization. In terms of processing, N-glycosylated. Glycosylation enhances apoptotic activity. Post-translationally, monoubiquitinated. In terms of tissue distribution, expressed in T-cells. Expressed in natural killer cells.

The protein resides in the cell membrane. Its subcellular location is the cytoplasmic vesicle lumen. The protein localises to the lysosome lumen. It localises to the secreted. It is found in the nucleus. In terms of biological role, cytokine that binds to TNFRSF6/FAS, a receptor that transduces the apoptotic signal into cells. Involved in cytotoxic T-cell-mediated apoptosis, natural killer cell-mediated apoptosis and in T-cell development. Initiates fratricidal/suicidal activation-induced cell death (AICD) in antigen-activated T-cells contributing to the termination of immune responses. TNFRSF6/FAS-mediated apoptosis also has a role in the induction of peripheral tolerance. Binds to TNFRSF6B/DcR3, a decoy receptor that blocks apoptosis. Functionally, induces FAS-mediated activation of NF-kappa-B, initiating non-apoptotic signaling pathways. Can induce apoptosis but does not appear to be essential for this process. Its function is as follows. Cytoplasmic form induces gene transcription inhibition. The protein is Tumor necrosis factor ligand superfamily member 6 (Faslg) of Mus musculus (Mouse).